Reading from the N-terminus, the 65-residue chain is Large ribosomal subunit protein bL33 (65 aa).

A disordered region spans residues 20–42 (APASEKRSPGVSRYTTEKNRRNT).

This sequence belongs to the bacterial ribosomal protein bL33 family.

In Prochlorococcus marinus (strain SARG / CCMP1375 / SS120), this protein is Large ribosomal subunit protein bL33.